We begin with the raw amino-acid sequence, 240 residues long: Probable transcriptional regulatory protein jhp_0149 (240 aa).

Belongs to the TACO1 family.

It is found in the cytoplasm. The protein is Probable transcriptional regulatory protein jhp_0149 of Helicobacter pylori (strain J99 / ATCC 700824) (Campylobacter pylori J99).